Reading from the N-terminus, the 330-residue chain is Beta-hexosaminidase (330 aa).

Substrate is bound by residues Asp62, Arg70, Arg133, and Lys163 to His164. His176 acts as the Proton donor/acceptor in catalysis. Asp246 acts as the Nucleophile in catalysis.

The protein belongs to the glycosyl hydrolase 3 family. NagZ subfamily.

The protein resides in the cytoplasm. It carries out the reaction Hydrolysis of terminal non-reducing N-acetyl-D-hexosamine residues in N-acetyl-beta-D-hexosaminides.. It functions in the pathway cell wall biogenesis; peptidoglycan recycling. In terms of biological role, plays a role in peptidoglycan recycling by cleaving the terminal beta-1,4-linked N-acetylglucosamine (GlcNAc) from peptide-linked peptidoglycan fragments, giving rise to free GlcNAc, anhydro-N-acetylmuramic acid and anhydro-N-acetylmuramic acid-linked peptides. In Idiomarina loihiensis (strain ATCC BAA-735 / DSM 15497 / L2-TR), this protein is Beta-hexosaminidase.